The sequence spans 827 residues: WD repeat-containing protein 27 (827 aa).

WD repeat units follow at residues 3–57 (NPQD…IWNT), 62–101 (HQLL…MWNL), 112–151 (LVPR…MLDI), 155–194 (AVRA…VWDH), 201–237 (YSSS…IFSL), 292–337 (FPVL…LANL), 344–387 (YYKD…VLEI), 502–542 (KPGP…VFDA), 546–584 (GTPA…MWSA), 590–629 (ALLL…RYHI), 646–687 (KLIC…VFDL), 698–740 (EAHS…LWDL), 746–784 (ERHF…VYEM), and 788–826 (TFSH…LFLA).

The protein is WD repeat-containing protein 27 (WDR27) of Homo sapiens (Human).